A 328-amino-acid polypeptide reads, in one-letter code: Cytochrome c biogenesis protein CcsA (328 aa).

The next 8 membrane-spanning stretches (helical) occupy residues 13-33, 46-66, 73-93, 101-121, 146-166, 234-254, 263-283, and 295-315; these read ISFSVVLIVMTIYFLTLLVNL, GIVITFFSITGFLFTRWIYSG, LYESLIFLSWAFSIIHMVSYF, LNAITAPSAIFIQGFATSGLL, MVLGYGALLCGSLLSIALLVI, IISLGFLFLTMGILSGAVWAN, WDPKETWAFITWTIFAIYLHI, and AIVASIGFLVIWICYFGVNLL.

The protein belongs to the CcmF/CycK/Ccl1/NrfE/CcsA family. May interact with Ccs1.

It is found in the plastid. The protein localises to the chloroplast thylakoid membrane. Required during biogenesis of c-type cytochromes (cytochrome c6 and cytochrome f) at the step of heme attachment. The chain is Cytochrome c biogenesis protein CcsA from Aethionema cordifolium (Lebanon stonecress).